We begin with the raw amino-acid sequence, 104 residues long: L-rhamnose mutarotase (104 aa).

Y18 contacts substrate. H22 functions as the Proton donor in the catalytic mechanism. Substrate contacts are provided by residues Y41 and 76–77 (WW).

This sequence belongs to the rhamnose mutarotase family. Homodimer.

It localises to the cytoplasm. The enzyme catalyses alpha-L-rhamnose = beta-L-rhamnose. It functions in the pathway carbohydrate metabolism; L-rhamnose metabolism. Involved in the anomeric conversion of L-rhamnose. In Opitutus terrae (strain DSM 11246 / JCM 15787 / PB90-1), this protein is L-rhamnose mutarotase.